The chain runs to 252 residues: Adenylate kinase (252 aa).

ATP is bound at residue 47–52 (GSGKGT). The segment at 67–96 (ATGDMLRSQVKQGTPLGLEAKKIMDQGGLV) is NMP. Residues T68, R73, 94–96 (GLV), 123–126 (GFPR), and Q130 each bind AMP. The interval 164 to 201 (GRLVHPASGRSYHKIFSPPKKEMTDDITGEPLVQRSDD) is LID. ATP is bound by residues R165 and 174–175 (SY). Residues R198 and R209 each contribute to the AMP site. Q237 contributes to the ATP binding site.

Belongs to the adenylate kinase family. AK2 subfamily. As to quaternary structure, monomer.

The protein localises to the cytoplasm. It is found in the cytosol. The protein resides in the mitochondrion intermembrane space. The enzyme catalyses AMP + ATP = 2 ADP. Functionally, catalyzes the reversible transfer of the terminal phosphate group between ATP and AMP. Plays an important role in cellular energy homeostasis and in adenine nucleotide metabolism. Adenylate kinase activity is critical for regulation of the phosphate utilization and the AMP de novo biosynthesis pathways. This is Adenylate kinase from Lodderomyces elongisporus (strain ATCC 11503 / CBS 2605 / JCM 1781 / NBRC 1676 / NRRL YB-4239) (Yeast).